Here is a 131-residue protein sequence, read N- to C-terminus: Profilin-1 (131 aa).

It belongs to the profilin family. As to quaternary structure, occurs in many kinds of cells as a complex with monomeric actin in a 1:1 ratio.

Its subcellular location is the cytoplasm. The protein resides in the cytoskeleton. Binds to actin and affects the structure of the cytoskeleton. At high concentrations, profilin prevents the polymerization of actin, whereas it enhances it at low concentrations. By binding to PIP2, it inhibits the formation of IP3 and DG. The polypeptide is Profilin-1 (PRO1) (Ricinus communis (Castor bean)).